The sequence spans 306 residues: Ornithine carbamoyltransferase (306 aa).

Carbamoyl phosphate is bound by residues 50 to 53 (STRT), Gln-77, Arg-101, and 128 to 131 (HPCQ). Residues Asn-160, Asp-224, and 228 to 229 (SM) contribute to the L-ornithine site. Residues 261–262 (CL) and Arg-289 each bind carbamoyl phosphate.

The protein belongs to the aspartate/ornithine carbamoyltransferase superfamily. OTCase family.

The protein localises to the cytoplasm. It catalyses the reaction carbamoyl phosphate + L-ornithine = L-citrulline + phosphate + H(+). It functions in the pathway amino-acid biosynthesis; L-arginine biosynthesis; L-arginine from L-ornithine and carbamoyl phosphate: step 1/3. In terms of biological role, reversibly catalyzes the transfer of the carbamoyl group from carbamoyl phosphate (CP) to the N(epsilon) atom of ornithine (ORN) to produce L-citrulline. This is Ornithine carbamoyltransferase from Aquifex aeolicus (strain VF5).